Reading from the N-terminus, the 216-residue chain is Protein-L-isoaspartate O-methyltransferase (216 aa).

The active site involves serine 65.

The protein belongs to the methyltransferase superfamily. L-isoaspartyl/D-aspartyl protein methyltransferase family.

Its subcellular location is the cytoplasm. It catalyses the reaction [protein]-L-isoaspartate + S-adenosyl-L-methionine = [protein]-L-isoaspartate alpha-methyl ester + S-adenosyl-L-homocysteine. Functionally, catalyzes the methyl esterification of L-isoaspartyl residues in peptides and proteins that result from spontaneous decomposition of normal L-aspartyl and L-asparaginyl residues. It plays a role in the repair and/or degradation of damaged proteins. This is Protein-L-isoaspartate O-methyltransferase from Chlorobium phaeobacteroides (strain DSM 266 / SMG 266 / 2430).